Here is a 418-residue protein sequence, read N- to C-terminus: Type II methyltransferase M.MspI (418 aa).

The SAM-dependent MTase C5-type domain maps to Phe-105–Val-404. Residue Cys-174 is part of the active site.

Belongs to the class I-like SAM-binding methyltransferase superfamily. C5-methyltransferase family.

The catalysed reaction is a 2'-deoxycytidine in DNA + S-adenosyl-L-methionine = a 5-methyl-2'-deoxycytidine in DNA + S-adenosyl-L-homocysteine + H(+). Its function is as follows. A methylase, recognizes the double-stranded sequence 5'-CCGG-3', methylates C-1 on both strands, and protects the DNA from cleavage by the MspI endonuclease. In Moraxella sp, this protein is Type II methyltransferase M.MspI (mspIM).